The sequence spans 321 residues: tRNA dimethylallyltransferase (321 aa).

24-31 contributes to the ATP binding site; that stretch reads GPTASGKS. Position 26-31 (26-31) interacts with substrate; sequence TASGKS. 2 interaction with substrate tRNA regions span residues 49–52 and 172–176; these read DSMQ and QRIVR.

Belongs to the IPP transferase family. Monomer. It depends on Mg(2+) as a cofactor.

The catalysed reaction is adenosine(37) in tRNA + dimethylallyl diphosphate = N(6)-dimethylallyladenosine(37) in tRNA + diphosphate. Its function is as follows. Catalyzes the transfer of a dimethylallyl group onto the adenine at position 37 in tRNAs that read codons beginning with uridine, leading to the formation of N6-(dimethylallyl)adenosine (i(6)A). In Mesorhizobium japonicum (strain LMG 29417 / CECT 9101 / MAFF 303099) (Mesorhizobium loti (strain MAFF 303099)), this protein is tRNA dimethylallyltransferase.